The primary structure comprises 159 residues: Nudix hydrolase DR_1025 (159 aa).

3 residues coordinate Mg(2+): Met-1, Arg-14, and Ser-49. 1–6 (MEHDER) is a binding site for ATP. Positions 11–144 (VELRAAGVVL…QIRMYQTKLF (134 aa)) constitute a Nudix hydrolase domain. An ATP-binding site is contributed by 50-51 (GA). The Nudix box motif lies at 50–71 (GAVEDGENPQDAAVREACEETG). Positions 53 and 65 each coordinate Mg(2+). 87-89 (FPD) is an ATP binding site. Arg-95 contacts Mg(2+).

Belongs to the Nudix hydrolase family. Homodimer. The cofactor is Mg(2+).

It carries out the reaction 8-oxo-dGTP + H2O = 8-oxo-dGDP + phosphate + H(+). The catalysed reaction is 8-oxo-GTP + H2O = 8-oxo-GDP + phosphate + H(+). The enzyme catalyses P(1),P(4)-bis(5'-adenosyl) tetraphosphate + H2O = AMP + ATP + 2 H(+). Hydrolase that can act as a nucleoside triphosphatase and a dinucleoside polyphosphate pyrophosphatase. The best substrates are 8-oxo-dGTP and 8-oxo-GTP. Other substrates include Ap4A, dGTP and GTP. May be involved in protection from damage caused by radiation. The protein is Nudix hydrolase DR_1025 of Deinococcus radiodurans (strain ATCC 13939 / DSM 20539 / JCM 16871 / CCUG 27074 / LMG 4051 / NBRC 15346 / NCIMB 9279 / VKM B-1422 / R1).